The sequence spans 141 residues: Ribosome-binding factor A (141 aa).

Residues 120–141 (DEALRAQSAGARPAGDEDPYKP) are disordered.

The protein belongs to the RbfA family. As to quaternary structure, monomer. Binds 30S ribosomal subunits, but not 50S ribosomal subunits or 70S ribosomes.

It is found in the cytoplasm. One of several proteins that assist in the late maturation steps of the functional core of the 30S ribosomal subunit. Associates with free 30S ribosomal subunits (but not with 30S subunits that are part of 70S ribosomes or polysomes). Required for efficient processing of 16S rRNA. May interact with the 5'-terminal helix region of 16S rRNA. This Corynebacterium jeikeium (strain K411) protein is Ribosome-binding factor A.